Reading from the N-terminus, the 304-residue chain is Transmembrane protein 178A (304 aa).

The signal sequence occupies residues 1–25 (MESRGLVTAVSLTLSICSLLLLVTA). Residues 26-186 (IFTDHWYETD…LLHLRRITAG (161 aa)) lie on the Extracellular side of the membrane. N165 carries an N-linked (GlcNAc...) asparagine glycan. Residues 187 to 207 (FLGMAAAVLLCGCIVAAISFF) traverse the membrane as a helical segment. Over 208–215 (WEESLTQH) the chain is Cytoplasmic. A helical transmembrane segment spans residues 216 to 236 (VAGLLFLMTGIFCTISLCTYA). Over 237–267 (ASVAYELNRQPKFIYGLPSDVEHGYSWSLFC) the chain is Extracellular. A helical membrane pass occupies residues 268-288 (AWCSLGLIVAAGCLCTAYPFI). Residues 289–304 (SRTKILHLKFARDSCV) are Cytoplasmic-facing.

The protein belongs to the TMEM178 family.

The protein localises to the endoplasmic reticulum membrane. In terms of biological role, may act as a negative regulator of osteoclast differentiation. This Xenopus laevis (African clawed frog) protein is Transmembrane protein 178A (tmem178a).